The following is a 29-amino-acid chain: NAD-reducing hydrogenase HoxS subunit delta (29 aa).

Residues 1–11 (MKHSEKNEIAS) are compositionally biased toward basic and acidic residues. The tract at residues 1–29 (MKHSEKNEIASHELPTTPLDPVLAAGRES) is disordered.

This sequence belongs to the [NiFe]/[NiFeSe] hydrogenase small subunit family. In terms of assembly, tetramer of an alpha and a gamma subunits (flavin-containing dimer), and a delta and a nickel-containing beta subunits (hydrogenase dimer). [4Fe-4S] cluster serves as cofactor. The cofactor is [3Fe-4S] cluster. Requires [2Fe-2S] cluster as cofactor. It depends on FMN as a cofactor. Ni(2+) is required as a cofactor.

The protein resides in the cytoplasm. It carries out the reaction H2 + NAD(+) = NADH + H(+). The protein is NAD-reducing hydrogenase HoxS subunit delta (hoxY) of Rhodococcus opacus (Nocardia opaca).